The primary structure comprises 352 residues: Mitochondrial ubiquitin ligase activator of NFKB 1 (352 aa).

Topologically, residues 1–8 are cytoplasmic; the sequence is MESGGRPS. Residues 9–29 traverse the membrane as a helical segment; the sequence is LCQFILLGTTSVVTAALYSVY. The Mitochondrial intermembrane portion of the chain corresponds to 30–238; sequence RQKARVSQEL…LLQRQESSVR (209 aa). Residue lysine 52 forms a Glycyl lysine isopeptide (Lys-Gly) (interchain with G-Cter in ubiquitin) linkage. Residues 239 to 259 form a helical membrane-spanning segment; it reads LWKVLALVFGFATCATLFFIL. Over 260 to 352 the chain is Cytoplasmic; sequence RKQYLQRQER…ITRVIPLYNS (93 aa). Glycyl lysine isopeptide (Lys-Gly) (interchain with G-Cter in ubiquitin) cross-links involve residues lysine 273 and lysine 299. An RING-type zinc finger spans residues 302–340; that stretch reads CVVCLSSFKSCVFLECGHVCSCTECYRALPEPKKCPICR.

Homooligomer. Interacts with MAP3K7/TAK1. Interacts with UBC9. Interacts with and sumoylates DNM1L. Interacts with MAVS. Interacts with TP53 (via N-terminus); the interaction leads to ubiquitination and proteasomal degradation of TP53. Post-translationally, ubiquitinated by PRKN during mitophagy, leading to its degradation and enhancement of mitophagy. Deubiquitinated by USP30. In terms of tissue distribution, widely expressed with highest levels in the heart, skeletal muscle, placenta, kidney and liver. Barely detectable in colon and thymus.

Its subcellular location is the mitochondrion outer membrane. It localises to the peroxisome. It catalyses the reaction S-ubiquitinyl-[E2 ubiquitin-conjugating enzyme]-L-cysteine + [acceptor protein]-L-lysine = [E2 ubiquitin-conjugating enzyme]-L-cysteine + N(6)-ubiquitinyl-[acceptor protein]-L-lysine.. It participates in protein modification; protein ubiquitination. The protein operates within protein modification; protein sumoylation. Its function is as follows. Exhibits weak E3 ubiquitin-protein ligase activity. E3 ubiquitin ligases accept ubiquitin from an E2 ubiquitin-conjugating enzyme in the form of a thioester and then directly transfer the ubiquitin to targeted substrates. Can ubiquitinate AKT1 preferentially at 'Lys-284' involving 'Lys-48'-linked polyubiquitination and seems to be involved in regulation of Akt signaling by targeting phosphorylated Akt to proteasomal degradation. Mediates polyubiquitination of cytoplasmic TP53 at 'Lys-24' which targets TP53 for proteasomal degradation, thus reducing TP53 levels in the cytoplasm and mitochondrion. Proposed to preferentially act as a SUMO E3 ligase at physiological concentrations. Plays a role in the control of mitochondrial morphology by promoting mitochondrial fragmentation, and influences mitochondrial localization. Likely to promote mitochondrial fission through negatively regulating the mitochondrial fusion proteins MFN1 and MFN2, acting in a pathway that is parallel to the PRKN/PINK1 regulatory pathway. May also be involved in the sumoylation of the membrane fission protein DNM1L. Inhibits cell growth. When overexpressed, activates JNK through MAP3K7/TAK1 and induces caspase-dependent apoptosis. Involved in the modulation of innate immune defense against viruses by inhibiting RIGI-dependent antiviral response. Can mediate RIGI sumoylation and disrupt its polyubiquitination. In Homo sapiens (Human), this protein is Mitochondrial ubiquitin ligase activator of NFKB 1 (MUL1).